Here is a 1391-residue protein sequence, read N- to C-terminus: MSLCRCSSICLRRPILRSFNFLNKYIDQSQHSGGLSSFQRLSFSNTGKNESTDDSNQIRCDADKTAADKKKQKQKEEEQAKIREYKRECLKVQKRVLAEEIRCSGEKDRILIQGMMKCLTDGMKKACTKIAKAKLIADKELAVQCAALSKKDKVKALLKKCEREKSKEKECNQNSPAEGDKDRTKKGKTKGKSGGGNKKRSTKENRAKKGKKLVKNRFTQKLEHCIKSEWADVCECRQNFTEDERKRLAASYKCMGTKIKSICRKRVIAEMCEAAGYVKSSEPKKKGKKKKNDEKKEKELEREILKEQAEEEAKIRGVVKEVKKKCKEKALKKKCKDLGRKMKEEAEKKKCAALAKKQKEEDEKKACKELAKKKKEADEKKKCEEAANKEKKAAEKKKCEKAAKERKEAAEKKKCEEAAKKEKEAAERKKCEELAKNIKKAAEKKKCKEAAKKEKEAAERKKCEELAKKIKKAAEKKKCEETAKKGKEVAERKKCEELAKKIKKAEIKKKCKKLAKKEKETAEKKKCEKAAKKRKEAAEKKKCEKAAKKRKEAAEKKKCEKSAKKRKEAAEKKKCEKAAKERKEAAEKKKCEEAAKKEKEVAERKKCEELAKKIKKAAEKKKCKEAAKKEKEAAEREKCGELAKKIKKAAEKKKCKKLAKKEKETAEKKKCEKAAKKRKEAAEKKKCAEAAKKEKEAAEKKKCEEAAKKEKEAAERKKCEELAKKIKKAAEKKKCKKLAKKKKAGEKNKLKKGNKKGKKALKEKKKCRELAKKKAAEKKKCKEAAKKEKEAAEKKKCEKTAKKRKEEAEKKKCEKTAKKRKEAAEKKKCEKAAKKRKEEAEKKKCEKTAKKRKETAEKKKCEKAAKKRKQAAEKKKCEKAAKKRKEAAEKKKCAEAAKKEKELAEKKKCEEAAKKEKEVAERKKCEELAKKIKKAAEKKKCKKLAKKEKKAGEKNKLKKKAGKGKKKCKKLGKKSKRAAEKKKCAEAAKKEKEAATKKKCEERAKKQKEAAEKKQCEERAKKLKEAAEQKQCEERAKKLKEAAEKKQCEERAKKLKEAAEQKQCEERAKKLKEAAEKKQCEERAKKEKEAAEKKQCEERAKKLKEAAEKKQCEERAKKEKEAAEKKRCEEAAKREKEAAEKKKCAEAAKKEKEATEKQKCAEAAKKEKEAAEKKKCAEAAKREKEAAQKKKCADLAKKEQEPAEMKKCEEAAKKEKEAAEKQKCAKAAKKEKEAAEKKKCAEAAKKEQEAAEKKKCAEAAKKEKEAEKKRKCEKAEKAAALKRQCAKLVIRAKEAALRKKCAIIAKKAKMAAEKKECEKLAKKAKEAIEWKKCAKLAKKKREAEKKKCAKLAKKEKEAAEKKKRCKDLAKNKKKGHKKKGRNENRKKRTDC.

Disordered regions lie at residues 170–213 (ECNQ…GKKL) and 280–300 (SSEPKKKGKKKKNDEKKEKEL). Basic residues predominate over residues 184 to 201 (TKKGKTKGKSGGGNKKRS). Positions 291-300 (KNDEKKEKEL) are enriched in basic and acidic residues. Repeat copies occupy residues 332–347 (KKKCKDLGRKMKEEAE), 348–363 (KKKCAALAKKQKEEDE), 364–379 (KKACKELAKKKKEADE), 380–395 (KKKCEEAANKEKKAAE), 396–411 (KKKCEKAAKERKEAAE), 412–427 (KKKCEEAAKKEKEAAE), 428–443 (RKKCEELAKNIKKAAE), 444–459 (KKKCKEAAKKEKEAAE), 460–475 (RKKCEELAKKIKKAAE), 476–491 (KKKCEETAKKGKEVAE), 492–507 (RKKCEELAKKIKKAEI), 508–523 (KKKCKKLAKKEKETAE), 524–539 (KKKCEKAAKKRKEAAE), 540–555 (KKKCEKAAKKRKEAAE), 556–571 (KKKCEKSAKKRKEAAE), 572–587 (KKKCEKAAKERKEAAE), 588–603 (KKKCEEAAKKEKEVAE), 604–619 (RKKCEELAKKIKKAAE), 620–635 (KKKCKEAAKKEKEAAE), 636–651 (REKCGELAKKIKKAAE), 652–667 (KKKCKKLAKKEKETAE), 668–683 (KKKCEKAAKKRKEAAE), 684–699 (KKKCAEAAKKEKEAAE), 700–715 (KKKCEEAAKKEKEAAE), 716–731 (RKKCEELAKKIKKAAE), 732–747 (KKKCKKLAKKKKAGEK), 748–763 (NKLKKGNKKGKKALKE), 764–779 (KKKCRELAKKKAAEKK), 780–795 (KCKEAAKKEKEAAEKK), 796–811 (KCEKTAKKRKEEAEKK), 812–827 (KCEKTAKKRKEAAEKK), 828–843 (KCEKAAKKRKEEAEKK), 844–859 (KCEKTAKKRKETAEKK), 860–875 (KCEKAAKKRKQAAEKK), 876–891 (KCEKAAKKRKEAAEKK), 892–907 (KCAEAAKKEKELAEKK), 908–923 (KCEEAAKKEKEVAERK), 924–939 (KCEELAKKIKKAAEKK), 940–955 (KCKKLAKKEKKAGEKN), 956–971 (KLKKKAGKGKKKCKKL), 972–987 (GKKSKRAAEKKKCAEA), 988–1003 (AKKEKEAATKKKCEER), 1004–1019 (AKKQKEAAEKKQCEER), 1020–1035 (AKKLKEAAEQKQCEER), 1036–1051 (AKKLKEAAEKKQCEER), 1052–1067 (AKKLKEAAEQKQCEER), 1068–1083 (AKKLKEAAEKKQCEER), 1084–1099 (AKKEKEAAEKKQCEER), 1100–1115 (AKKLKEAAEKKQCEER), 1116–1131 (AKKEKEAAEKKRCEEA), 1132–1147 (AKREKEAAEKKKCAEA), 1148–1163 (AKKEKEATEKQKCAEA), 1164–1179 (AKKEKEAAEKKKCAEA), 1180–1195 (AKREKEAAQKKKCADL), 1196–1211 (AKKEQEPAEMKKCEEA), 1212–1227 (AKKEKEAAEKQKCAKA), 1228–1243 (AKKEKEAAEKKKCAEA), 1244–1259 (AKKEQEAAEKKKCAEA), and 1260–1275 (AKKEKEAEKKRKCEKA). Residues 332-1275 (KKKCKDLGRK…AEKKRKCEKA (944 aa)) form a 59 X 16 AA approximate tandem repeats of [KR]-K-X-C-X-X-X-A-K-X-X-K-X-X-X-E region. The disordered stretch occupies residues 370-429 (LAKKKKEADEKKKCEEAANKEKKAAEKKKCEKAAKERKEAAEKKKCEEAAKKEKEAAERK). A disordered region spans residues 516–577 (KKEKETAEKK…EAAEKKKCEK (62 aa)). The segment covering 517–577 (KEKETAEKKK…EAAEKKKCEK (61 aa)) has biased composition (basic and acidic residues). The segment covering 729–765 (AAEKKKCKKLAKKKKAGEKNKLKKGNKKGKKALKEKK) has biased composition (basic residues). Disordered regions lie at residues 729 to 881 (AAEK…EKAA), 900 to 922 (EKELAEKKKCEEAAKKEKEVAER), and 934 to 1013 (KAAE…AAEK). The span at 766–881 (KCRELAKKKA…AEKKKCEKAA (116 aa)) shows a compositional bias: basic and acidic residues. Basic residues-rich tracts occupy residues 934–949 (KAAEKKKCKKLAKKEK) and 956–976 (KLKKKAGKGKKKCKKLGKKSK). A compositionally biased stretch (basic and acidic residues) spans 977 to 1013 (RAAEKKKCAEAAKKEKEAATKKKCEERAKKQKEAAEK). Disordered regions lie at residues 1076-1095 (EKKQCEERAKKEKEAAEKKQ) and 1104-1212 (KEAA…EEAA). A compositionally biased stretch (basic and acidic residues) spans 1353 to 1370 (KKEKEAAEKKKRCKDLAK). Residues 1353 to 1391 (KKEKEAAEKKKRCKDLAKNKKKGHKKKGRNENRKKRTDC) are disordered. A compositionally biased stretch (basic residues) spans 1371–1391 (NKKKGHKKKGRNENRKKRTDC).

In terms of tissue distribution, testis. Primary spermatocytes and early spermatids.

It localises to the cytoplasm. Functionally, possible structural role in the sperm tail. The protein is Axoneme-associated protein mst101(2) (mst101(2)) of Drosophila hydei (Fruit fly).